A 457-amino-acid chain; its full sequence is Multidrug resistance protein MdtK (457 aa).

Transmembrane regions (helical) follow at residues 11 to 31 (LLAL…MGFV), 53 to 73 (IWLP…PVIA), 93 to 113 (WLAG…GYII), 127 to 147 (AVGY…FQVA), 160 to 180 (GMVM…IFIY), 188 to 208 (LGGI…FIAM), 243 to 263 (LPIA…ALLV), 276 to 296 (IALN…AAVT), 314 to 334 (AART…IFTV), 350 to 370 (VVAL…SDSI), 387 to 407 (IFFI…YILA), and 418 to 438 (PAGF…LMML).

This sequence belongs to the multi antimicrobial extrusion (MATE) (TC 2.A.66.1) family. MdtK subfamily.

It localises to the cell inner membrane. Multidrug efflux pump that functions probably as a Na(+)/drug antiporter. The sequence is that of Multidrug resistance protein MdtK from Salmonella heidelberg (strain SL476).